The sequence spans 459 residues: Trigger factor (459 aa).

A PPIase FKBP-type domain is found at 166 to 245 (GDFANIDLTA…VNSVKAEELP (80 aa)).

The protein belongs to the FKBP-type PPIase family. Tig subfamily.

It is found in the cytoplasm. It carries out the reaction [protein]-peptidylproline (omega=180) = [protein]-peptidylproline (omega=0). Involved in protein export. Acts as a chaperone by maintaining the newly synthesized protein in an open conformation. Functions as a peptidyl-prolyl cis-trans isomerase. This is Trigger factor from Bifidobacterium longum (strain NCC 2705).